A 197-amino-acid polypeptide reads, in one-letter code: uncharacterized protein (197 aa).

This sequence belongs to the methyltransferase superfamily.

This is an uncharacterized protein from Mycobacterium bovis (strain ATCC BAA-935 / AF2122/97).